The sequence spans 201 residues: Glutathione peroxidase 1 (201 aa).

S32 bears the Phosphoserine mark. U47 is an active-site residue. Position 47 (U47) is a non-standard amino acid, selenocysteine. K86, K112, and K146 each carry N6-acetyllysine; alternate. N6-succinyllysine; alternate occurs at positions 86, 112, and 146. Phosphoserine occurs at positions 195 and 199.

Belongs to the glutathione peroxidase family. In terms of assembly, homotetramer. Interacts with MIEN1. During periods of oxidative stress, Sec-47 may react with a superoxide radical, irreversibly lose hydroselenide and be converted to dehydroalanine.

The protein localises to the cytoplasm. It localises to the mitochondrion. The catalysed reaction is 2 glutathione + H2O2 = glutathione disulfide + 2 H2O. It catalyses the reaction a hydroperoxy polyunsaturated fatty acid + 2 glutathione = a hydroxy polyunsaturated fatty acid + glutathione disulfide + H2O. The enzyme catalyses tert-butyl hydroperoxide + 2 glutathione = tert-butanol + glutathione disulfide + H2O. It carries out the reaction cumene hydroperoxide + 2 glutathione = 2-phenylpropan-2-ol + glutathione disulfide + H2O. The catalysed reaction is (13S)-hydroperoxy-(9Z,11E)-octadecadienoate + 2 glutathione = (13S)-hydroxy-(9Z,11E)-octadecadienoate + glutathione disulfide + H2O. It catalyses the reaction (9S)-hydroperoxy-(10E,12Z)-octadecadienoate + 2 glutathione = (9S)-hydroxy-(10E,12Z)-octadecadienoate + glutathione disulfide + H2O. The enzyme catalyses (5S)-hydroperoxy-(6E,8Z,11Z,14Z)-eicosatetraenoate + 2 glutathione = (5S)-hydroxy-(6E,8Z,11Z,14Z)-eicosatetraenoate + glutathione disulfide + H2O. It carries out the reaction (12S)-hydroperoxy-(5Z,8Z,10E,14Z)-eicosatetraenoate + 2 glutathione = (12S)-hydroxy-(5Z,8Z,10E,14Z)-eicosatetraenoate + glutathione disulfide + H2O. The catalysed reaction is (12R)-hydroperoxy-(5Z,8Z,10E,14Z)-eicosatetraenoate + 2 glutathione = (12R)-hydroxy-(5Z,8Z,10E,14Z)-eicosatetraenoate + glutathione disulfide + H2O. It catalyses the reaction (15S)-hydroperoxy-(5Z,8Z,11Z,13E)-eicosatetraenoate + 2 glutathione = (15S)-hydroxy-(5Z,8Z,11Z,13E)-eicosatetraenoate + glutathione disulfide + H2O. The enzyme catalyses (5S)-hydroperoxy-(6E,8Z,11Z,14Z,17Z)-eicosapentaenoate + 2 glutathione = (5S)-hydroxy-(6E,8Z,11Z,14Z,17Z)-eicosapentaenoate + glutathione disulfide + H2O. It carries out the reaction (12S)-hydroperoxy-(5Z,8Z,10E,14Z,17Z)-eicosapentaenoate + 2 glutathione = (12S)-hydroxy-(5Z,8Z,10E,14Z,17Z)-eicosapentaenoate + glutathione disulfide + H2O. The catalysed reaction is (15S)-hydroperoxy-(5Z,8Z,11Z,13E,17Z)-eicosapentaenoate + 2 glutathione = (15S)-hydroxy-(5Z,8Z,11Z,13E,17Z)-eicosapentaenoate + glutathione disulfide + H2O. It catalyses the reaction (15S)-hydroperoxy-(11Z,13E)-eicosadienoate + 2 glutathione = (15S)-hydroxy-(11Z,13E)-eicosadienoate + glutathione disulfide + H2O. The enzyme catalyses (17S)-hydroperoxy-(4Z,7Z,10Z,13Z,15E,19Z)-docosahexaenoate + 2 glutathione = (17S)-hydroxy-(4Z,7Z,10Z,13Z,15E,19Z)-docosahexaenoate + glutathione disulfide + H2O. Catalyzes the reduction of hydroperoxides in a glutathione-dependent manner thus regulating cellular redox homeostasis. Can reduce small soluble hydroperoxides such as H2O2, cumene hydroperoxide and tert-butyl hydroperoxide, as well as several fatty acid-derived hydroperoxides. In platelets catalyzes the reduction of 12-hydroperoxyeicosatetraenoic acid, the primary product of the arachidonate 12-lipoxygenase pathway. The chain is Glutathione peroxidase 1 (GPX1) from Pongo pygmaeus (Bornean orangutan).